The primary structure comprises 294 residues: HTH-type transcriptional regulator XapR (294 aa).

The region spanning 7 to 64 is the HTH lysR-type domain; the sequence is TDLKLLRYFLAVAEELHFGRAAARLNMSQPPLSIHIKELENQLGTQLFIRHSRSVVLT. The H-T-H motif DNA-binding region spans 24–43; sequence FGRAAARLNMSQPPLSIHIK.

The protein belongs to the LysR transcriptional regulatory family.

Functionally, positive regulator required for the expression of xapA and xapB. Binds to the inducer xanthosine. The polypeptide is HTH-type transcriptional regulator XapR (xapR) (Escherichia coli (strain K12)).